The following is a 477-amino-acid chain: ATP synthase subunit beta (477 aa).

ATP is bound at residue 148–155; sequence GGAGVGKT.

Belongs to the ATPase alpha/beta chains family. F-type ATPases have 2 components, CF(1) - the catalytic core - and CF(0) - the membrane proton channel. CF(1) has five subunits: alpha(3), beta(3), gamma(1), delta(1), epsilon(1). CF(0) has three main subunits: a(1), b(2) and c(9-12). The alpha and beta chains form an alternating ring which encloses part of the gamma chain. CF(1) is attached to CF(0) by a central stalk formed by the gamma and epsilon chains, while a peripheral stalk is formed by the delta and b chains.

The protein localises to the cell inner membrane. The enzyme catalyses ATP + H2O + 4 H(+)(in) = ADP + phosphate + 5 H(+)(out). Its function is as follows. Produces ATP from ADP in the presence of a proton gradient across the membrane. The catalytic sites are hosted primarily by the beta subunits. This Psychrobacter cryohalolentis (strain ATCC BAA-1226 / DSM 17306 / VKM B-2378 / K5) protein is ATP synthase subunit beta.